The sequence spans 466 residues: 3-isopropylmalate dehydratase large subunit (466 aa).

Positions 347, 407, and 410 each coordinate [4Fe-4S] cluster.

This sequence belongs to the aconitase/IPM isomerase family. LeuC type 1 subfamily. Heterodimer of LeuC and LeuD. [4Fe-4S] cluster is required as a cofactor.

It carries out the reaction (2R,3S)-3-isopropylmalate = (2S)-2-isopropylmalate. It functions in the pathway amino-acid biosynthesis; L-leucine biosynthesis; L-leucine from 3-methyl-2-oxobutanoate: step 2/4. Functionally, catalyzes the isomerization between 2-isopropylmalate and 3-isopropylmalate, via the formation of 2-isopropylmaleate. The protein is 3-isopropylmalate dehydratase large subunit of Buchnera aphidicola subsp. Diuraphis noxia.